Reading from the N-terminus, the 119-residue chain is Large ribosomal subunit protein bL19 (119 aa).

This sequence belongs to the bacterial ribosomal protein bL19 family.

This protein is located at the 30S-50S ribosomal subunit interface and may play a role in the structure and function of the aminoacyl-tRNA binding site. The protein is Large ribosomal subunit protein bL19 (rplS) of Mycoplasma genitalium (strain ATCC 33530 / DSM 19775 / NCTC 10195 / G37) (Mycoplasmoides genitalium).